The chain runs to 186 residues: Ribosome-recycling factor (186 aa).

It belongs to the RRF family.

The protein resides in the cytoplasm. In terms of biological role, responsible for the release of ribosomes from messenger RNA at the termination of protein biosynthesis. May increase the efficiency of translation by recycling ribosomes from one round of translation to another. The sequence is that of Ribosome-recycling factor from Rickettsia conorii (strain ATCC VR-613 / Malish 7).